A 386-amino-acid polypeptide reads, in one-letter code: Patatin-10 (386 aa).

The signal sequence occupies residues 1–23 (MATTKSFLILFFMILATTSSTCA). The PNPLA domain occupies 32–229 (LSIDGGGIKG…TVGDPALLSL (198 aa)). Residues 36–41 (GGGIKG) carry the GXGXXG motif. Positions 75–79 (GTSTG) match the GXSXG motif. Serine 77 serves as the catalytic Nucleophile. Asparagine 115 carries N-linked (GlcNAc...) asparagine glycosylation. The active-site Proton acceptor is aspartate 215. The short motif at 215–217 (DGG) is the DGA/G element. A coiled-coil region spans residues 321 to 384 (ENALTGTTTE…NRKKLRANKA (64 aa)).

Belongs to the patatin family. In terms of tissue distribution, tuber.

The protein resides in the vacuole. Probable lipolytic acyl hydrolase (LAH), an activity which is thought to be involved in the response of tubers to pathogens. The polypeptide is Patatin-10 (Solanum tuberosum (Potato)).